Here is a 594-residue protein sequence, read N- to C-terminus: Aspartate--tRNA ligase (594 aa).

L-aspartate is bound at residue E171. The interval 195–198 (QLFK) is aspartate. R217 contributes to the L-aspartate binding site. ATP contacts are provided by residues 217–219 (RDE) and Q226. H449 provides a ligand contact to L-aspartate. E483 lines the ATP pocket. R490 lines the L-aspartate pocket. 535–538 (GLDR) contributes to the ATP binding site.

It belongs to the class-II aminoacyl-tRNA synthetase family. Type 1 subfamily. In terms of assembly, homodimer.

Its subcellular location is the cytoplasm. The enzyme catalyses tRNA(Asp) + L-aspartate + ATP = L-aspartyl-tRNA(Asp) + AMP + diphosphate. Catalyzes the attachment of L-aspartate to tRNA(Asp) in a two-step reaction: L-aspartate is first activated by ATP to form Asp-AMP and then transferred to the acceptor end of tRNA(Asp). In Proteus mirabilis (strain HI4320), this protein is Aspartate--tRNA ligase.